Reading from the N-terminus, the 264-residue chain is Small ribosomal subunit protein uS2 (264 aa).

The segment at 225 to 264 is disordered; it reads GKKAREERQLAAAKDAAGDAKPEAEEAPVAAEAEEAPAAE.

This sequence belongs to the universal ribosomal protein uS2 family.

The protein is Small ribosomal subunit protein uS2 of Corynebacterium glutamicum (strain R).